The following is a 468-amino-acid chain: Probable cytosol aminopeptidase (468 aa).

Residues K242 and D247 each coordinate Mn(2+). K254 is an active-site residue. Positions 265, 324, and 326 each coordinate Mn(2+). The active site involves R328.

It belongs to the peptidase M17 family. Requires Mn(2+) as cofactor.

It localises to the cytoplasm. The enzyme catalyses Release of an N-terminal amino acid, Xaa-|-Yaa-, in which Xaa is preferably Leu, but may be other amino acids including Pro although not Arg or Lys, and Yaa may be Pro. Amino acid amides and methyl esters are also readily hydrolyzed, but rates on arylamides are exceedingly low.. It carries out the reaction Release of an N-terminal amino acid, preferentially leucine, but not glutamic or aspartic acids.. Functionally, presumably involved in the processing and regular turnover of intracellular proteins. Catalyzes the removal of unsubstituted N-terminal amino acids from various peptides. The chain is Probable cytosol aminopeptidase from Neisseria meningitidis serogroup A / serotype 4A (strain DSM 15465 / Z2491).